We begin with the raw amino-acid sequence, 309 residues long: General transcription factor IIH subunit 3 (309 aa).

The C4-type zinc finger occupies 269–286 (CSVCLSIFCNFSPICTTC).

The protein belongs to the TFB4 family. As to quaternary structure, part of a TFIID-containing RNA polymerase II pre-initiation complex that is composed of TBP and at least GTF2A1, GTF2A2, GTF2E1, GTF2E2, GTF2F1, GTF2H2, GTF2H3, GTF2H4, GTF2H5, GTF2B, TCEA1, ERCC2, ERCC3, TAF1, TAF2, TAF3, TAF4, TAF5, TAF6, TAF7, TAF8, TAF9, TAF10, TAF11, TAF12 and TAF13. Component of the 7-subunit TFIIH core complex composed of XPB/ERCC3, XPD/ERCC2, GTF2H1, GTF2H2, GTF2H3, GTF2H4 and GTF2H5, which is active in NER. The core complex associates with the 3-subunit CDK-activating kinase (CAK) module composed of CCNH/cyclin H, CDK7 and MNAT1 to form the 10-subunit holoenzyme (holo-TFIIH) active in transcription. Interacts with RARA; the interaction requires prior phosphorylation of RARA on 'Ser-369' which then enhances interaction of RARA with CDK7.

The protein localises to the nucleus. Component of the general transcription and DNA repair factor IIH (TFIIH) core complex, which is involved in general and transcription-coupled nucleotide excision repair (NER) of damaged DNA and, when complexed to CAK, in RNA transcription by RNA polymerase II. In NER, TFIIH acts by opening DNA around the lesion to allow the excision of the damaged oligonucleotide and its replacement by a new DNA fragment. In transcription, TFIIH has an essential role in transcription initiation. When the pre-initiation complex (PIC) has been established, TFIIH is required for promoter opening and promoter escape. Phosphorylation of the C-terminal tail (CTD) of the largest subunit of RNA polymerase II by the kinase module CAK controls the initiation of transcription. In Bos taurus (Bovine), this protein is General transcription factor IIH subunit 3 (GTF2H3).